Consider the following 247-residue polypeptide: Acidic 27 kDa endochitinase (247 aa).

The signal sequence occupies residues 1 to 16; that stretch reads MVLCCVFLLFLTGSFA. Glu-84 acts as the Proton donor in catalysis. Cys-206 and Cys-238 are disulfide-bonded.

Belongs to the glycosyl hydrolase 19 family. Chitinase class II subfamily.

It localises to the secreted. The protein resides in the extracellular space. The catalysed reaction is Random endo-hydrolysis of N-acetyl-beta-D-glucosaminide (1-&gt;4)-beta-linkages in chitin and chitodextrins.. Functionally, defense against chitin-containing fungal pathogens. This chain is Acidic 27 kDa endochitinase (CHI17), found in Solanum lycopersicum (Tomato).